A 242-amino-acid polypeptide reads, in one-letter code: uncharacterized protein (242 aa).

The protein to E.coli MazG and to plasmid pIP1100 erythromycin esterase.

This is an uncharacterized protein from Streptomyces cacaoi.